A 425-amino-acid chain; its full sequence is UDP-sugar transporter protein SLC35A5 (425 aa).

The Cytoplasmic portion of the chain corresponds to 1 to 7 (MESNCGH). The chain crosses the membrane as a helical span at residues 8–28 (PMLSVSSAMYTFLLGAIFITL). The Lumenal segment spans residues 29-52 (SSSRILLVKYSANEENKYDYLPTT). A helical transmembrane segment spans residues 53 to 73 (VNVCSELVKLVFCALVSFWVL). Residues 74-92 (KKEDHQNRKLRCGSWKEFF) are Cytoplasmic-facing. A helical transmembrane segment spans residues 93-115 (NFMKWSIPAFLYFLDNLIVFYVL). At 116 to 119 (SYLQ) the chain is on the lumenal side. A helical membrane pass occupies residues 120–142 (PAMAVIFSNFSIITTALLFRIVL). Topologically, residues 143-147 (KRHLN) are cytoplasmic. A helical transmembrane segment spans residues 148-168 (GIQWASLLILFLSIVALTSGT). Topologically, residues 169-228 (ETSQHSLAGHGFHHDALFSPSNSCLLFRSECPRKDNCTAKEWTFSEAQWNTTARVFSHIR) are lumenal. N-linked (GlcNAc...) asparagine glycans are attached at residues asparagine 204 and asparagine 218. The helical transmembrane segment at 229 to 249 (LGLGHVLIIVQCFISSMANIY) threads the bilayer. The Cytoplasmic portion of the chain corresponds to 250 to 263 (NEKILKEGNQLTES). A helical transmembrane segment spans residues 264–284 (IFVQNSKLYFFGVLFNGLTLG). Over 285–303 (LQSGNRDQIKNCGIFYGHN) the chain is Lumenal. A helical membrane pass occupies residues 304–324 (AFSVALIFVTAFQGLSVAFIL). The Cytoplasmic segment spans residues 325–330 (KFLDNM). The chain crosses the membrane as a helical span at residues 331-351 (FHVLMAQVTTVVITTVSVLVF). The Lumenal portion of the chain corresponds to 352-354 (DFR). Residues 355 to 375 (PSLEFFLEAPSVLLSILIYNA) form a helical membrane-spanning segment. The Cytoplasmic segment spans residues 376–425 (SNPQGVENVPRKERIRDLSGTLWERSSGDGEELERLTKPKSDIESDEDTF). Phosphoserine occurs at positions 394, 416, and 420. The disordered stretch occupies residues 398 to 425 (WERSSGDGEELERLTKPKSDIESDEDTF). The segment covering 408-418 (LERLTKPKSDI) has biased composition (basic and acidic residues).

The protein belongs to the nucleotide-sugar transporter family. SLC35A subfamily. As to quaternary structure, probably forms homooligomers and heterooligomers with SLC35A1, SLC35A2, SLC35A3 and SLC35A4.

It is found in the golgi apparatus membrane. It catalyses the reaction UMP(out) + UDP-alpha-D-glucuronate(in) = UMP(in) + UDP-alpha-D-glucuronate(out). The enzyme catalyses UMP(out) + UDP-N-acetyl-alpha-D-glucosamine(in) = UMP(in) + UDP-N-acetyl-alpha-D-glucosamine(out). The catalysed reaction is UDP-N-acetyl-alpha-D-galactosamine(in) + UMP(out) = UDP-N-acetyl-alpha-D-galactosamine(out) + UMP(in). Functionally, probable UDP-sugar:UMP transmembrane antiporter involved in UDP-alpha-D-glucuronate/UDP-GlcA, UDP-GlcNAc/UDP-N-acetyl-alpha-D-glucosamine and UDP-N-acetyl-alpha-D-galactosamine/UDP-GalNAc transport from the cytosol to the lumen of the Golgi. The polypeptide is UDP-sugar transporter protein SLC35A5 (Bos taurus (Bovine)).